Consider the following 468-residue polypeptide: Histone acetyltransferase type B catalytic subunit (468 aa).

Phosphoserine is present on serine 8. Interaction with histone H4 N-terminus regions lie at residues 44 to 46 (EEE) and 208 to 210 (YKF). Residues 248–250 (FLI) and 255–261 (QKSGNGS) each bind acetyl-CoA. Glutamate 283 acts as the Proton donor/acceptor in catalysis. The disordered stretch occupies residues 442–468 (SSNLKRKLDDDENTEGSSSKKARVEDA).

Belongs to the HAT1 family. In terms of assembly, component of the HAT-B complex composed of at least HAT1 and HAT2. The HAT-B complex binds to histone H4 tail. In the nucleus, interacts with GSK1 and SSB1. In the cytoplasm, interacts with ATG3 and ATG9. In terms of processing, phosphorylated at Ser-8 by GSK1 in the nucleus which impairs its translocation to the cytoplasm through interfering the interaction between HAT1 and SSB1. Dephosphorylation under nutrient starvation conditions promotes the interaction between HAT1 and SSB1 and results in the translocation of HAT1 from the nucleus to the cytoplasm in order to acetylate ATG3 and ATG9.

It localises to the nucleus. The protein resides in the cytoplasm. The protein localises to the preautophagosomal structure. It catalyses the reaction L-lysyl-[protein] + acetyl-CoA = N(6)-acetyl-L-lysyl-[protein] + CoA + H(+). In terms of biological role, catalytic component of the histone acetylase B (HAT-B) complex. Has intrinsic substrate specificity that modifies lysine in recognition sequence GXGKXG. Involved in DNA double-strand break repair. Required for appressorium turgor pressure, autophagy and conidial nuclear degradation. During the germination process and upon starvation conditions, translocates from the nucleus to the cytoplasm where it acetylates ATG3 at 'lys-262' and 'Lys-267', thus influencing autophagy through controlling ATG3-ATG8 interaction. Also acetylates ATG9 at 'Lys-621' to regulate ATG9 binding to vesicles, which is also important for autophagy and pathogenicity. The protein is Histone acetyltransferase type B catalytic subunit of Pyricularia oryzae (strain 70-15 / ATCC MYA-4617 / FGSC 8958) (Rice blast fungus).